We begin with the raw amino-acid sequence, 238 residues long: tRNA (guanine-N(7)-)-methyltransferase (238 aa).

Residues glutamate 68, glutamate 93, aspartate 120, and aspartate 143 each coordinate S-adenosyl-L-methionine. Aspartate 143 is a catalytic residue. Substrate contacts are provided by residues lysine 147, aspartate 179, and 216–219 (TKFE).

Belongs to the class I-like SAM-binding methyltransferase superfamily. TrmB family.

It catalyses the reaction guanosine(46) in tRNA + S-adenosyl-L-methionine = N(7)-methylguanosine(46) in tRNA + S-adenosyl-L-homocysteine. It functions in the pathway tRNA modification; N(7)-methylguanine-tRNA biosynthesis. Functionally, catalyzes the formation of N(7)-methylguanine at position 46 (m7G46) in tRNA. The protein is tRNA (guanine-N(7)-)-methyltransferase of Shewanella denitrificans (strain OS217 / ATCC BAA-1090 / DSM 15013).